Consider the following 450-residue polypeptide: Homogentisate 1,2-dioxygenase (450 aa).

Catalysis depends on histidine 304, which acts as the Proton acceptor. The Fe cation site is built by histidine 347 and glutamate 353. Residues tyrosine 362 and histidine 383 each coordinate homogentisate. Histidine 383 serves as a coordination point for Fe cation.

The protein belongs to the homogentisate dioxygenase family. Hexamer; dimer of trimers. The cofactor is Fe cation.

It carries out the reaction homogentisate + O2 = 4-maleylacetoacetate + H(+). Its pathway is amino-acid degradation; L-phenylalanine degradation; acetoacetate and fumarate from L-phenylalanine: step 4/6. Its function is as follows. Involved in the catabolism of homogentisate (2,5-dihydroxyphenylacetate or 2,5-OH-PhAc), a central intermediate in the degradation of phenylalanine and tyrosine. Catalyzes the oxidative ring cleavage of the aromatic ring of homogentisate to yield maleylacetoacetate. The sequence is that of Homogentisate 1,2-dioxygenase from Burkholderia thailandensis (strain ATCC 700388 / DSM 13276 / CCUG 48851 / CIP 106301 / E264).